Reading from the N-terminus, the 130-residue chain is uncharacterized protein (130 aa).

2 helical membrane passes run 35-57 and 72-91; these read FLIT…FISL and IVFF…LLLL.

The protein resides in the cell membrane. This is an uncharacterized protein from Pasteurella multocida (strain Pm70).